A 72-amino-acid chain; its full sequence is UPF0346 protein GK1571 (72 aa).

The protein belongs to the UPF0346 family.

The protein is UPF0346 protein GK1571 of Geobacillus kaustophilus (strain HTA426).